A 147-amino-acid polypeptide reads, in one-letter code: MDIAKIMGYLPHRYPFLLVDRILELTSEEIVGLKNVTINEPFFQGHFPGEPIMPGVLIIEALAQTGGVLAFTLVSDFRGKPIYFMGMDKVRFRKPVRPGDQLILKLKILKRRGPTFKMSAEAFVEEQLVAEAELLATIGAAKSEREA.

The active site involves His46.

It belongs to the thioester dehydratase family. FabZ subfamily.

It localises to the cytoplasm. The catalysed reaction is a (3R)-hydroxyacyl-[ACP] = a (2E)-enoyl-[ACP] + H2O. Its function is as follows. Involved in unsaturated fatty acids biosynthesis. Catalyzes the dehydration of short chain beta-hydroxyacyl-ACPs and long chain saturated and unsaturated beta-hydroxyacyl-ACPs. The protein is 3-hydroxyacyl-[acyl-carrier-protein] dehydratase FabZ of Syntrophobacter fumaroxidans (strain DSM 10017 / MPOB).